The chain runs to 233 residues: Phosphoribosylaminoimidazole-succinocarboxamide synthase (233 aa).

It belongs to the SAICAR synthetase family.

The enzyme catalyses 5-amino-1-(5-phospho-D-ribosyl)imidazole-4-carboxylate + L-aspartate + ATP = (2S)-2-[5-amino-1-(5-phospho-beta-D-ribosyl)imidazole-4-carboxamido]succinate + ADP + phosphate + 2 H(+). The protein operates within purine metabolism; IMP biosynthesis via de novo pathway; 5-amino-1-(5-phospho-D-ribosyl)imidazole-4-carboxamide from 5-amino-1-(5-phospho-D-ribosyl)imidazole-4-carboxylate: step 1/2. This chain is Phosphoribosylaminoimidazole-succinocarboxamide synthase, found in Thermococcus sibiricus (strain DSM 12597 / MM 739).